Here is a 1150-residue protein sequence, read N- to C-terminus: MSTLLDIKSSVLRQVQVCPSFRRKTEQEPEVTNSQEPPTGAWKPGDGVEFFAHMRLILKKGDGRQGLPCPEVLLRSGSPAPAEPVDPNRGLRTLTQEEVEMLYEEALYTVLHRAGTMGPDQVDDEEVLLSYLQQVFGTSSEEHMEAIMRVKKAKAPTYALKVSVMRAKNLLAKDPNGFSDPYCMLGILPASSAPQEPSGQKEQRFGFRKGSKRSSPLPAKCIQVTEVKNSTLNPVWKEHFLFEIDDVNTDQLHLDIWDHDDDVSLAEACRKLNEVIGLKGMTRYFKQIVKSARANGTAGPTEDHTDDFLGCLNIPIREVPVAGADRWFKLEPRSSASRVQGDCHLVLKLITTQRDTVMSQRGRSGFLSYLLLLSRVLRFEHRVEEPNSSSWRGELSGPGTTVLCLHGAQSNLSPLQLAVLHWQVSSRHHQTRTLDYGYLLGLLEDVQAHWEEAASLPQEQEESLADSFSAFSEFGLRLLRQLRDYFPATNSTAVYRLELLLKCLEKLQLFQPAFEICPFETELSMDIAAALKRGNREWYDQLLNTKSPREQPGPQRLAGLVELADIIYEDLQLCYGVYASLFHGILKVDFFTLTFRQLERLVAEEAWVLTEELSPKMNLEVASGLFELYLTLADTQRFWSCIPGRESRSLALAGIHTPFLPAVKLWLQVLRDQAKWRLQGAVDVDTLEPVDAASKHSSSAATASLCLSHIQELWVRLAWPDPSQAQGLGTQLSQDMCEASLFYTELLRKKVDTQPGAAGEAVSEQLCVVLNNVELVRRASGQALRGLAWSEGASGLEGVLPRPLLSCIQALDEDLHREAHTVTAHLTSKMVADIRKYIQHISLSPDSIQNDEAVAPLLKYLDEKLALLNDALVKENLNRVLEALWELLLQAILQALSANRDVSADFYGRFHFTLEALVSFFHAEGQGLPLENLRDGSYKRLQEELRLHKCSTRECIEQFYLDKLKQRSLEQNRFGRLTVRCHYEAAEQRLAVEVLHAADLLPLDANGLSDPFVIVELGPPHLFPLVRSQRTQVKARTLHPVYDELFHFSVPAEACRRRGACVLFTVMDHDWLSTNDFAGEAALGLGGISGIARPHVGGGMRPGQPITLHLRRPRAQVRSALRMLEGRTSREAQEFVKKLKELEKCMEADL.

The disordered stretch occupies residues 22-44 (RRKTEQEPEVTNSQEPPTGAWKP). In terms of domain architecture, C2 1 spans 139–298 (SSEEHMEAIM…VKSARANGTA (160 aa)). Positions 174 and 180 each coordinate Ca(2+). The segment at 193–214 (APQEPSGQKEQRFGFRKGSKRS) is disordered. Ca(2+) contacts are provided by Asp258 and Asp260. One can recognise an MHD1 domain in the interval 626 to 747 (FELYLTLADT…EASLFYTELL (122 aa)). Positions 851 to 959 (DEAVAPLLKY…CSTRECIEQF (109 aa)) constitute an MHD2 domain. Residues 973–1099 (RFGRLTVRCH…GIARPHVGGG (127 aa)) form the C2 2 domain. 7 residues coordinate Ca(2+): Leu1003, Asp1004, Asp1010, Asp1068, Asp1070, Ser1073, and Asp1076.

The protein belongs to the unc-13 family. As to quaternary structure, interacts with ADGRB1, this interaction is direct. Interacts with endosomal SNARE proteins VAMP3, VAMP4, STX6 and STX16; this interaction is increased in the presence of calcium. Ca(2+) is required as a cofactor. In terms of tissue distribution, prominently expressed in brain structures including hypothalamus, amygdala, stria terminalis and periaqueductal gray (at protein level). Expressed in nonneuronal tissues, including placenta, lung, pancreas, spleen, and testes. Within placenta, expression is restricted to the syncytiotrophoblasts.

Its subcellular location is the cytoplasm. It is found in the cytosol. It localises to the recycling endosome membrane. The protein localises to the late endosome membrane. The protein resides in the golgi apparatus. Its subcellular location is the trans-Golgi network membrane. It is found in the cell membrane. In terms of biological role, functions in endosome to Golgi retrograde transport. In response to calcium influx, may interact with SNARE fusion receptors and membrane phospholipids to mediate endosome fusion with the trans-Golgi network. By promoting the recycling of secretory vesicle transmembrane proteins, it indirectly controls dense-core secretory vesicle biogenesis, maturation and their ability to mediate the constitutive and regulated secretion of neurotransmitters and hormones. May regulate behavior and food intake by controlling calcium-stimulated exocytosis of neurotransmitters including NPY and serotonin and hormones like insulin. Proposed to play a role in hypothalamic neuronal firing by modulating gamma-aminobutyric acid (GABA)ergic inhibitory neurotransmission. The sequence is that of BAI1-associated protein 3 from Mus musculus (Mouse).